A 321-amino-acid polypeptide reads, in one-letter code: CPX chromosomal region candidate gene 1 protein homolog (321 aa).

Residues 1–83 (MSSPTKEGSD…TEIQKDQREE (83 aa)) are disordered. 2 stretches are compositionally biased toward polar residues: residues 21–32 (NEPSNDCTTDIE) and 44–60 (VETN…TSQE).

The protein is CPX chromosomal region candidate gene 1 protein homolog (CPXCR1) of Macaca fascicularis (Crab-eating macaque).